The following is a 508-amino-acid chain: UBX domain-containing protein 4 (508 aa).

An interaction with UBQLN1 region spans residues Met1 to Glu200. At Met1–Thr413 the chain is on the cytoplasmic side. Composition is skewed to polar residues over residues Ser117–Asn151 and Thr160–Ser187. A disordered region spans residues Ser117–Asn196. One can recognise a UBX domain in the interval Glu315–Leu393. Residues Leu414–Phe434 lie within the membrane without spanning it. Topologically, residues Ser435–Met508 are cytoplasmic. The segment at Thr440–Met508 is disordered. The segment covering Gln441 to Ser458 has biased composition (polar residues). A compositionally biased stretch (basic and acidic residues) spans Lys459–Asp491. Position 489 is a phosphothreonine (Thr489). The segment covering Asn498–Met508 has biased composition (polar residues).

In terms of assembly, directly interacts with VCP. Interacts with UBQLN1. Forms a complex with VCP and UBQLN1. As to expression, expressed in many tissues, including heart, brain, placenta, lung, liver, skeletal muscle, kidney and pancreas. Accumulates in Alzheimer disease-afflicted brains (at protein level).

It is found in the endoplasmic reticulum membrane. The protein localises to the nucleus envelope. Involved in endoplasmic reticulum-associated protein degradation (ERAD). Acts as a platform to recruit both UBQLN1 and VCP to the ER during ERAD. The sequence is that of UBX domain-containing protein 4 (UBXN4) from Homo sapiens (Human).